A 108-amino-acid chain; its full sequence is UPF0060 membrane protein KPN78578_15550 (108 aa).

4 helical membrane passes run 6–26, 29–49, 61–81, and 86–106; these read LLFFATALCEIVGCYLPWLWL, GATPLLLIPTALALALFVWLL, AAYGGVYVCTALLWLRVVDGV, and YDWAGAAIALCGMLIIVAGWG.

Belongs to the UPF0060 family.

It is found in the cell inner membrane. This Klebsiella pneumoniae subsp. pneumoniae (strain ATCC 700721 / MGH 78578) protein is UPF0060 membrane protein KPN78578_15550.